A 1102-amino-acid chain; its full sequence is Phosphatidylinositol 4,5-bisphosphate 3-kinase catalytic subunit gamma isoform (1102 aa).

The 108-residue stretch at 34–141 (SMELIPIEFV…PGQIHLVQRH (108 aa)) folds into the PI3K-ABD domain. Residues 217–309 (NNCIFIVIHR…GEEIHVVLDT (93 aa)) enclose the PI3K-RBD domain. One can recognise a C2 PI3K-type domain in the interval 357-521 (CDRKFRVKIR…NSMSISILLD (165 aa)). In terms of domain architecture, PIK helical spans 541-723 (DRVRAEMPNQ…AVILEAYLRG (183 aa)). The 284-residue stretch at 797–1080 (AIEKCKVMAS…QIEVCRDKGW (284 aa)) folds into the PI3K/PI4K catalytic domain. Residues 803 to 809 (VMASKKK) are G-loop. Residues 829 to 838 (GIIFKHGDDL) and 864 to 872 (LLPYGCIST) contribute to the ATP site. A catalytic loop region spans residues 943–951 (GIGDRHNDN). 961 to 969 (FHIDFGHIL) is an ATP binding site. Residues 962–988 (HIDFGHILGNYKSFLGINKERVPFVLT) are activation loop. Threonine 1024 carries the post-translational modification Phosphothreonine; by PKA. Phosphoserine; by autocatalysis is present on serine 1101.

The protein belongs to the PI3/PI4-kinase family. In terms of assembly, heterodimer of a catalytic subunit PIK3CG and a PIK3R5 or PIK3R6 regulatory subunit. Interacts with GRK2 through the PIK helical domain. Interaction with GRK2 is required for targeting to agonist-occupied receptor. Interacts with PDE3B; regulates PDE3B activity and thereby cAMP levels in cells. Interacts with TPM2. Interacts with EPHA8; regulates integrin-mediated cell adhesion to substrate. Interacts with HRAS; the interaction is required for membrane recruitment and beta-gamma G protein dimer-dependent activation of the PI3K gamma complex PIK3CG:PIK3R6. Post-translationally, autophosphorylation at Ser-1101 has no effect on the phosphatidylinositol-4,5-bisphosphate 3-kinase activity. Pancreas, skeletal muscle, liver and heart.

It localises to the cytoplasm. Its subcellular location is the cell membrane. It catalyses the reaction a 1,2-diacyl-sn-glycero-3-phospho-(1D-myo-inositol) + ATP = a 1,2-diacyl-sn-glycero-3-phospho-(1D-myo-inositol-3-phosphate) + ADP + H(+). The enzyme catalyses a 1,2-diacyl-sn-glycero-3-phospho-(1D-myo-inositol-4,5-bisphosphate) + ATP = a 1,2-diacyl-sn-glycero-3-phospho-(1D-myo-inositol-3,4,5-trisphosphate) + ADP + H(+). The catalysed reaction is a 1,2-diacyl-sn-glycero-3-phospho-(1D-myo-inositol 4-phosphate) + ATP = a 1,2-diacyl-sn-glycero-3-phospho-(1D-myo-inositol-3,4-bisphosphate) + ADP + H(+). It carries out the reaction L-seryl-[protein] + ATP = O-phospho-L-seryl-[protein] + ADP + H(+). Its pathway is phospholipid metabolism; phosphatidylinositol phosphate biosynthesis. Activated by both the alpha and the beta-gamma G proteins following stimulation of G protein-coupled receptors (GPCRs). Activation by GPCRs is assisted by the regulatory subunits (PIK3R5 or PIK3R6) leading to the translocation from the cytosol to the plasma membrane and to kinase activation. Inhibited by AS-604850 and AS-605240. Functionally, phosphoinositide-3-kinase (PI3K) that phosphorylates PtdIns(4,5)P2 (Phosphatidylinositol 4,5-bisphosphate) to generate phosphatidylinositol 3,4,5-trisphosphate (PIP3). PIP3 plays a key role by recruiting PH domain-containing proteins to the membrane, including AKT1 and PDPK1, activating signaling cascades involved in cell growth, survival, proliferation, motility and morphology. Links G-protein coupled receptor activation to PIP3 production. Involved in immune, inflammatory and allergic responses. Modulates leukocyte chemotaxis to inflammatory sites and in response to chemoattractant agents. May control leukocyte polarization and migration by regulating the spatial accumulation of PIP3 and by regulating the organization of F-actin formation and integrin-based adhesion at the leading edge. Controls motility of dendritic cells. Together with PIK3CD is involved in natural killer (NK) cell development and migration towards the sites of inflammation. Participates in T-lymphocyte migration. Regulates T-lymphocyte proliferation, activation, and cytokine production. Together with PIK3CD participates in T-lymphocyte development. Required for B-lymphocyte development and signaling. Together with PIK3CD participates in neutrophil respiratory burst. Together with PIK3CD is involved in neutrophil chemotaxis and extravasation. Together with PIK3CB promotes platelet aggregation and thrombosis. Regulates alpha-IIb/beta-3 integrins (ITGA2B/ ITGB3) adhesive function in platelets downstream of P2Y12 through a lipid kinase activity-independent mechanism. May have also a lipid kinase activity-dependent function in platelet aggregation. Involved in endothelial progenitor cell migration. Negative regulator of cardiac contractility. Modulates cardiac contractility by anchoring protein kinase A (PKA) and PDE3B activation, reducing cAMP levels. Regulates cardiac contractility also by promoting beta-adrenergic receptor internalization by binding to GRK2 and by non-muscle tropomyosin phosphorylation. Also has serine/threonine protein kinase activity: both lipid and protein kinase activities are required for beta-adrenergic receptor endocytosis. May also have a scaffolding role in modulating cardiac contractility. Contributes to cardiac hypertrophy under pathological stress. Through simultaneous binding of PDE3B to RAPGEF3 and PIK3R6 is assembled in a signaling complex in which the PI3K gamma complex is activated by RAPGEF3 and which is involved in angiogenesis. In neutrophils, participates in a phospholipase C-activating N-formyl peptide-activated GPCR (G protein-coupled receptor) signaling pathway downstream of RASGRP4-mediated Ras-activation, to promote neutrophil functional responses. In Homo sapiens (Human), this protein is Phosphatidylinositol 4,5-bisphosphate 3-kinase catalytic subunit gamma isoform (PIK3CG).